Consider the following 179-residue polypeptide: Large ribosomal subunit protein eL18 (179 aa).

Belongs to the eukaryotic ribosomal protein eL18 family. Component of the large ribosomal subunit.

Its subcellular location is the cytoplasm. It is found in the cytosol. The protein resides in the rough endoplasmic reticulum. In terms of biological role, component of the large ribosomal subunit. The ribosome is a large ribonucleoprotein complex responsible for the synthesis of proteins in the cell. The chain is Large ribosomal subunit protein eL18 (rpl18) from Salmo salar (Atlantic salmon).